The sequence spans 281 residues: 3-deoxy-manno-octulosonate cytidylyltransferase (281 aa).

This sequence belongs to the KdsB family.

The protein resides in the cytoplasm. The catalysed reaction is 3-deoxy-alpha-D-manno-oct-2-ulosonate + CTP = CMP-3-deoxy-beta-D-manno-octulosonate + diphosphate. Its pathway is nucleotide-sugar biosynthesis; CMP-3-deoxy-D-manno-octulosonate biosynthesis; CMP-3-deoxy-D-manno-octulosonate from 3-deoxy-D-manno-octulosonate and CTP: step 1/1. The protein operates within bacterial outer membrane biogenesis; lipopolysaccharide biosynthesis. Its function is as follows. Activates KDO (a required 8-carbon sugar) for incorporation into bacterial lipopolysaccharide in Gram-negative bacteria. This Xanthomonas campestris pv. campestris (strain B100) protein is 3-deoxy-manno-octulosonate cytidylyltransferase.